We begin with the raw amino-acid sequence, 271 residues long: Serine protease SP24D (271 aa).

Residues 1–22 (MTLADRVPLALAALAYLALVSG) form the signal peptide. Residues 23 to 49 (VRFHLSEQNDVLPGGSQARRPFFQGAR) constitute a propeptide, activation peptide. The Peptidase S1 domain maps to 50-269 (IVGGSVASEG…FVTWIQTTMR (220 aa)). Cys-75 and Cys-91 are joined by a disulfide. Residues His-90 and Asp-136 each act as charge relay system in the active site. 2 disulfides stabilise this stretch: Cys-199–Cys-211 and Cys-221–Cys-246. Ser-225 functions as the Charge relay system in the catalytic mechanism.

Belongs to the peptidase S1 family. Highest level of adult expression is in the thorax.

This chain is Serine protease SP24D (Sp24D), found in Anopheles gambiae (African malaria mosquito).